The following is a 306-amino-acid chain: Polyisoprenyl-teichoic acid--peptidoglycan teichoic acid transferase TagU (306 aa).

Topologically, residues 1–11 (MRNERRKKKKT) are cytoplasmic. Residues 12–32 (LLLTILTIIGLLVLGTGGYAY) form a helical; Signal-anchor for type II membrane protein membrane-spanning segment. The Extracellular segment spans residues 33 to 306 (YLWHKAASTV…TKELKESLEK (274 aa)).

The protein belongs to the LytR/CpsA/Psr (LCP) family. In terms of assembly, interacts with MreB. Interacts with FloT.

Its subcellular location is the cell membrane. The protein resides in the membrane raft. The protein operates within cell wall biogenesis. In terms of biological role, may catalyze the final step in cell wall teichoic acid biosynthesis, the transfer of the anionic cell wall polymers (APs) from their lipid-linked precursor to the cell wall peptidoglycan (PG). The polypeptide is Polyisoprenyl-teichoic acid--peptidoglycan teichoic acid transferase TagU (Bacillus subtilis (strain 168)).